A 1048-amino-acid polypeptide reads, in one-letter code: Self-sufficient cytochrome P450 monooxygenase CYP505E4 (1048 aa).

Cys-405 contributes to the heme binding site. Residues Val-499–Leu-640 enclose the Flavodoxin-like domain. Residues Ser-505–Thr-509 and Val-584–Ala-616 contribute to the FMN site. An FAD-binding FR-type domain is found at Arg-678–Pro-906.

The protein in the N-terminal section; belongs to the cytochrome P450 family. FAD serves as cofactor. The cofactor is FMN. Heme is required as a cofactor.

It carries out the reaction 2 oxidized [cytochrome P450] + NADPH = 2 reduced [cytochrome P450] + NADP(+) + H(+). It catalyses the reaction an organic molecule + reduced [NADPH--hemoprotein reductase] + O2 = an alcohol + oxidized [NADPH--hemoprotein reductase] + H2O + H(+). The catalysed reaction is dodecanoate + reduced [NADPH--hemoprotein reductase] + O2 = 5-hydroxydodecanoate + oxidized [NADPH--hemoprotein reductase] + H2O + H(+). The enzyme catalyses tetradecanoate + reduced [NADPH--hemoprotein reductase] + O2 = 7-hydroxytetradecanoate + oxidized [NADPH--hemoprotein reductase] + H2O + H(+). It carries out the reaction dodecan-1-ol + reduced [NADPH--hemoprotein reductase] + O2 = 1,5-dodecanediol + oxidized [NADPH--hemoprotein reductase] + H2O + H(+). It catalyses the reaction dodecan-1-ol + reduced [NADPH--hemoprotein reductase] + O2 = 1,4-dodecanediol + oxidized [NADPH--hemoprotein reductase] + H2O + H(+). The catalysed reaction is dodecan-1-ol + reduced [NADPH--hemoprotein reductase] + O2 = 1,6-dodecanediol + oxidized [NADPH--hemoprotein reductase] + H2O + H(+). Its function is as follows. Self-sufficient cytochrome P450 monooxygenase that catalyzes the regioselective in-chain hydroxylation of alkanes, fatty alcohols, and fatty acids at the omega-7 position. Performs hydroxylation of C10-C16 n-alkanes and C12 and C14 fatty alcohols; and thereby enables the one step biocatalytic synthesis of rare alcohols such as 5-dodecanol and 7-tetradecanol. Converts 1-dodecanol into 1,5-dodecanediol as major product with very little sub-terminally hydroxylated products with the 1,4-dodecanediol and 1,6-dodecanediol more abundant. Converts dodecanoic acid to 5-hydroxydodecanoic acid which can be further converted into delta-dodecalactone by lactonization of the 5-hydroxy acid at low pH. Also gives sub-terminal hydroxylation of dodecanoic acid with 9-hydroxydodecanoic acid being the second most abundant product. This is Self-sufficient cytochrome P450 monooxygenase CYP505E4 from Penicillium expansum (Blue mold rot fungus).